A 586-amino-acid chain; its full sequence is Glutamate--tRNA ligase (586 aa).

A 'HIGH' region motif is present at residues 114–124; sequence PNPNGPWHVGH. Basic and acidic residues-rich tracts occupy residues 431 to 443 and 459 to 468; these read ARGE…HEAV and HPEHPDRGDR. Residues 431–468 are disordered; it reads ARGEGPEESHEAVEVPVDDGPDEATPQVHPEHPDRGDR.

It belongs to the class-I aminoacyl-tRNA synthetase family. Glutamate--tRNA ligase type 2 subfamily.

The protein localises to the cytoplasm. The enzyme catalyses tRNA(Glu) + L-glutamate + ATP = L-glutamyl-tRNA(Glu) + AMP + diphosphate. Functionally, catalyzes the attachment of glutamate to tRNA(Glu) in a two-step reaction: glutamate is first activated by ATP to form Glu-AMP and then transferred to the acceptor end of tRNA(Glu). The protein is Glutamate--tRNA ligase of Halobacterium salinarum (strain ATCC 29341 / DSM 671 / R1).